A 476-amino-acid polypeptide reads, in one-letter code: MTANVLFPLFANLHDRAVLVVGGGKVAERKTEALLKVGALPIIGAPSLTASLQHWAETGRITWRQGTFENSWLQEDIWLVIAATDQPEVNHAAARAAHAQRLFVNVVDDIALSNVQVPAVVERGPLRIAISSGGGAPMVARYLRQQLESLIDDSWGRLTTLFAQRRDTIRARYPNIEARRRFFETQLTGPLQRLLRKQRHAEAEAVLEAALAETPPTGSGSVTLVGAGAGDAGLLTLNALRALNEADIILYDRLVSDTVLQVARRDAEQIEVGKSATGHSVRQEDIHSLMLQHARAGQRVVRLKGGDPFVFGRGGEELEFLRTHNIPYEVIPGITAALACAAYAGIPLTHRDHAQSLCLITAHCQSSLDTLDWAALAQERQTLAFYMGVAGLPTIQQRLCEAGRAETTPFALIENGARAQQRVLTGTLKTLAHTAQTYAVRPPALLILGEVTTLAEHLHWFGTAPLSAPCPPALIL.

The tract at residues 1-207 is precorrin-2 dehydrogenase /sirohydrochlorin ferrochelatase; sequence MTANVLFPLF…QRHAEAEAVL (207 aa). Residues 25–26 and 46–47 contribute to the NAD(+) site; these read KV and PS. Residue Ser132 is modified to Phosphoserine. The tract at residues 220–476 is uroporphyrinogen-III C-methyltransferase; sequence GSVTLVGAGA…SAPCPPALIL (257 aa). Catalysis depends on Asp252, which acts as the Proton acceptor. Catalysis depends on Lys274, which acts as the Proton donor. Residues 305-307, Val310, 335-336, Met387, and Gly416 each bind S-adenosyl-L-methionine; these read GGD and TA.

The protein in the N-terminal section; belongs to the precorrin-2 dehydrogenase / sirohydrochlorin ferrochelatase family. This sequence in the C-terminal section; belongs to the precorrin methyltransferase family.

It carries out the reaction uroporphyrinogen III + 2 S-adenosyl-L-methionine = precorrin-2 + 2 S-adenosyl-L-homocysteine + H(+). The catalysed reaction is precorrin-2 + NAD(+) = sirohydrochlorin + NADH + 2 H(+). It catalyses the reaction siroheme + 2 H(+) = sirohydrochlorin + Fe(2+). It functions in the pathway cofactor biosynthesis; adenosylcobalamin biosynthesis; precorrin-2 from uroporphyrinogen III: step 1/1. Its pathway is cofactor biosynthesis; adenosylcobalamin biosynthesis; sirohydrochlorin from precorrin-2: step 1/1. It participates in porphyrin-containing compound metabolism; siroheme biosynthesis; precorrin-2 from uroporphyrinogen III: step 1/1. The protein operates within porphyrin-containing compound metabolism; siroheme biosynthesis; siroheme from sirohydrochlorin: step 1/1. It functions in the pathway porphyrin-containing compound metabolism; siroheme biosynthesis; sirohydrochlorin from precorrin-2: step 1/1. Functionally, multifunctional enzyme that catalyzes the SAM-dependent methylations of uroporphyrinogen III at position C-2 and C-7 to form precorrin-2 via precorrin-1. Then it catalyzes the NAD-dependent ring dehydrogenation of precorrin-2 to yield sirohydrochlorin. Finally, it catalyzes the ferrochelation of sirohydrochlorin to yield siroheme. The sequence is that of Siroheme synthase from Xylella fastidiosa (strain 9a5c).